The primary structure comprises 351 residues: Flagellar P-ring protein (351 aa).

Residues 1 to 20 form the signal peptide; it reads MKKILFLFTASLLLHVTLQA.

It belongs to the FlgI family. As to quaternary structure, the basal body constitutes a major portion of the flagellar organelle and consists of four rings (L,P,S, and M) mounted on a central rod.

It is found in the periplasm. The protein resides in the bacterial flagellum basal body. Functionally, assembles around the rod to form the L-ring and probably protects the motor/basal body from shearing forces during rotation. This is Flagellar P-ring protein from Sulfurimonas denitrificans (strain ATCC 33889 / DSM 1251) (Thiomicrospira denitrificans (strain ATCC 33889 / DSM 1251)).